The primary structure comprises 283 residues: Bifunctional protein FolD (283 aa).

NADP(+) is bound by residues 166–168, serine 191, and isoleucine 232; that span reads GQS.

Belongs to the tetrahydrofolate dehydrogenase/cyclohydrolase family. As to quaternary structure, homodimer.

It catalyses the reaction (6R)-5,10-methylene-5,6,7,8-tetrahydrofolate + NADP(+) = (6R)-5,10-methenyltetrahydrofolate + NADPH. It carries out the reaction (6R)-5,10-methenyltetrahydrofolate + H2O = (6R)-10-formyltetrahydrofolate + H(+). Its pathway is one-carbon metabolism; tetrahydrofolate interconversion. Catalyzes the oxidation of 5,10-methylenetetrahydrofolate to 5,10-methenyltetrahydrofolate and then the hydrolysis of 5,10-methenyltetrahydrofolate to 10-formyltetrahydrofolate. In Laribacter hongkongensis (strain HLHK9), this protein is Bifunctional protein FolD.